Reading from the N-terminus, the 401-residue chain is Rab-interacting lysosomal protein (401 aa).

The region spanning 11–101 (PGWGSREAAG…REENERLRRE (91 aa)) is the RH1 domain. The stretch at 75–181 (DSLQVSAQPA…AQDRERERQQ (107 aa)) forms a coiled coil. Disordered regions lie at residues 167–239 (TQLR…SEAG) and 304–388 (KMLG…SALH). Positions 172-181 (AQDRERERQQ) are enriched in basic and acidic residues. One can recognise an RH2 domain in the interval 240 to 316 (QCRFSREEFE…GTPEEAESSE (77 aa)). A necessary for interaction with RAB7A and RAB34, lysosomal distribution and morphology region spans residues 272-333 (FQRELLTDHR…LLSDDKGDHP (62 aa)). Thr308 carries the post-translational modification Phosphothreonine. Over residues 310–319 (EEAESSEDEA) the composition is skewed to acidic residues. 2 positions are modified to phosphoserine: Ser314 and Ser315.

As to quaternary structure, homodimer. Interacts with RAB7A. Interacts with RAB34. Identified in a complex with MREG and DCTN1; interacts directly with MREG. Interacts with CLN3. Interacts with FLCN; the interaction is direct and promotes association between RILP and RAB34. As to expression, ubiquitous. Strongly expressed in fetal heart, heart, stomach, spleen, adrenal gland, thyroid gland, salivary gland, fetal liver, liver and lung. Poorly expressed in brain.

Its subcellular location is the late endosome membrane. It is found in the lysosome membrane. The protein resides in the cytoplasmic vesicle. It localises to the phagosome membrane. Functionally, rab effector playing a role in late endocytic transport to degradative compartments. Involved in the regulation of lysosomal morphology and distribution. Induces recruitment of dynein-dynactin motor complexes to Rab7A-containing late endosome and lysosome compartments. Promotes centripetal migration of phagosomes and the fusion of phagosomes with the late endosomes and lysosomes. The chain is Rab-interacting lysosomal protein (RILP) from Homo sapiens (Human).